A 198-amino-acid chain; its full sequence is Recombination protein RecR (198 aa).

The segment at Cys-57–Cys-72 adopts a C4-type zinc-finger fold. The 96-residue stretch at Ser-80–Ser-175 folds into the Toprim domain.

It belongs to the RecR family.

May play a role in DNA repair. It seems to be involved in an RecBC-independent recombinational process of DNA repair. It may act with RecF and RecO. In Staphylococcus haemolyticus (strain JCSC1435), this protein is Recombination protein RecR.